The chain runs to 297 residues: Homoserine kinase (297 aa).

Residue 82–92 participates in ATP binding; the sequence is PLTRGLGSSAS.

This sequence belongs to the GHMP kinase family. Homoserine kinase subfamily.

It localises to the cytoplasm. The catalysed reaction is L-homoserine + ATP = O-phospho-L-homoserine + ADP + H(+). Its pathway is amino-acid biosynthesis; L-threonine biosynthesis; L-threonine from L-aspartate: step 4/5. Catalyzes the ATP-dependent phosphorylation of L-homoserine to L-homoserine phosphate. The sequence is that of Homoserine kinase from Bacillus cereus (strain ATCC 10987 / NRS 248).